A 551-amino-acid polypeptide reads, in one-letter code: Trehalose-6-phosphate hydrolase (551 aa).

Residue aspartate 200 is the Nucleophile of the active site. The Proton donor role is filled by glutamate 251.

This sequence belongs to the glycosyl hydrolase 13 family.

It is found in the cytoplasm. It carries out the reaction alpha,alpha-trehalose 6-phosphate + H2O = D-glucose 6-phosphate + D-glucose. Functionally, hydrolyzes trehalose-6-phosphate to glucose and glucose 6-phosphate. Can also very effectively hydrolyze p-nitrophenyl-alpha-D-glucopyranoside, but it does not recognize trehalose, sucrose, maltose, isomaltose, or maltodextrins. This chain is Trehalose-6-phosphate hydrolase (treC), found in Escherichia coli (strain K12).